A 425-amino-acid polypeptide reads, in one-letter code: 5-aminovalerate aminotransferase DavT (425 aa).

Pyridoxal 5'-phosphate is bound by residues 112 to 113 (GS), Tyr139, and 240 to 243 (DEVQ). Lys269 is modified (N6-(pyridoxal phosphate)lysine). Thr298 is a binding site for pyridoxal 5'-phosphate.

It belongs to the class-III pyridoxal-phosphate-dependent aminotransferase family. Pyridoxal 5'-phosphate serves as cofactor.

It catalyses the reaction 5-aminopentanoate + 2-oxoglutarate = 5-oxopentanoate + L-glutamate. Catalyzes the conversion of 5-aminovalerate to 5-oxopentanoate. In Pseudomonas putida (strain ATCC 47054 / DSM 6125 / CFBP 8728 / NCIMB 11950 / KT2440), this protein is 5-aminovalerate aminotransferase DavT (davT).